Reading from the N-terminus, the 179-residue chain is Inosine/xanthosine triphosphatase (179 aa).

Glutamate 71 provides a ligand contact to Mg(2+). Position 71-72 (71-72) interacts with substrate; it reads EA.

Belongs to the YjjX NTPase family. Homodimer. The cofactor is Mg(2+). It depends on Mn(2+) as a cofactor.

The catalysed reaction is XTP + H2O = XDP + phosphate + H(+). It carries out the reaction ITP + H2O = IDP + phosphate + H(+). Functionally, phosphatase that hydrolyzes non-canonical purine nucleotides such as XTP and ITP to their respective diphosphate derivatives. Probably excludes non-canonical purines from DNA/RNA precursor pool, thus preventing their incorporation into DNA/RNA and avoiding chromosomal lesions. In Shewanella sp. (strain MR-4), this protein is Inosine/xanthosine triphosphatase.